The following is a 393-amino-acid chain: Nuclear hormone receptor family member nhr-90 (393 aa).

The nuclear receptor DNA-binding region spans 6–79; that stretch reads LQTCKICGAE…AGMKIEYFQH (74 aa). Residues 9-30 form an NR C4-type zinc finger; that stretch reads CKICGAENTRGNHFGVQCCRAC. Residues 47–62 form an NR C4-type; degenerate zinc finger; it reads CLSVHCGEAARFCKPC. The NR LBD domain maps to 121 to 388; sequence DLNSLVGKAS…FSHPEMFIDT (268 aa).

It belongs to the nuclear hormone receptor family.

The protein localises to the nucleus. Orphan nuclear receptor. The chain is Nuclear hormone receptor family member nhr-90 (nhr-90) from Caenorhabditis elegans.